The sequence spans 264 residues: Protein ADMETOS (264 aa).

In terms of tissue distribution, paternally imprinted expression in the endosperm.

Its function is as follows. Product of a dosage-sensitive gene that contributes to the maintenance of paternally and maternally imprinted gene expression in the endosperm in order to balance parental contributions. Underlies postzygotic reproductive isolation by promoting triploid seed arrest in a genetic dosage-dependent manner, thus being a component of postzygotic interploidy hybridization barriers. The polypeptide is Protein ADMETOS (Arabidopsis thaliana (Mouse-ear cress)).